A 272-amino-acid chain; its full sequence is Acetylglutamate kinase (272 aa).

Substrate is bound by residues 46–47, R68, and N166; that span reads GA.

It belongs to the acetylglutamate kinase family. ArgB subfamily.

Its subcellular location is the cytoplasm. It carries out the reaction N-acetyl-L-glutamate + ATP = N-acetyl-L-glutamyl 5-phosphate + ADP. It functions in the pathway amino-acid biosynthesis; L-arginine biosynthesis; N(2)-acetyl-L-ornithine from L-glutamate: step 2/4. Catalyzes the ATP-dependent phosphorylation of N-acetyl-L-glutamate. The polypeptide is Acetylglutamate kinase (Dehalococcoides mccartyi (strain ATCC BAA-2100 / JCM 16839 / KCTC 5957 / BAV1)).